We begin with the raw amino-acid sequence, 201 residues long: FMN-dependent NADH:quinone oxidoreductase (201 aa).

Residues 92–95 (MWNL) and 136–139 (STGG) each bind FMN.

The protein belongs to the azoreductase type 1 family. Homodimer. The cofactor is FMN.

It catalyses the reaction 2 a quinone + NADH + H(+) = 2 a 1,4-benzosemiquinone + NAD(+). It carries out the reaction N,N-dimethyl-1,4-phenylenediamine + anthranilate + 2 NAD(+) = 2-(4-dimethylaminophenyl)diazenylbenzoate + 2 NADH + 2 H(+). In terms of biological role, quinone reductase that provides resistance to thiol-specific stress caused by electrophilic quinones. Its function is as follows. Also exhibits azoreductase activity. Catalyzes the reductive cleavage of the azo bond in aromatic azo compounds to the corresponding amines. This is FMN-dependent NADH:quinone oxidoreductase from Coprothermobacter proteolyticus (strain ATCC 35245 / DSM 5265 / OCM 4 / BT).